We begin with the raw amino-acid sequence, 241 residues long: DNA repair protein RecO (241 aa).

This sequence belongs to the RecO family.

Involved in DNA repair and RecF pathway recombination. The polypeptide is DNA repair protein RecO (Yersinia pseudotuberculosis serotype O:1b (strain IP 31758)).